We begin with the raw amino-acid sequence, 125 residues long: Ino eighty subunit 5 (125 aa).

T124 is modified (phosphothreonine).

Component of the chromatin-remodeling INO80 complex, at least composed of ARP4, ARP5, ARP8, RVB1, RVB2, TAF14, NHP10, IES1, IES3, IES4, IES6, ACT1, IES2, IES5 and INO80.

The protein resides in the nucleus. This is Ino eighty subunit 5 (IES5) from Saccharomyces cerevisiae (strain ATCC 204508 / S288c) (Baker's yeast).